We begin with the raw amino-acid sequence, 104 residues long: Large ribosomal subunit protein uL24 (104 aa).

This sequence belongs to the universal ribosomal protein uL24 family. In terms of assembly, part of the 50S ribosomal subunit.

One of two assembly initiator proteins, it binds directly to the 5'-end of the 23S rRNA, where it nucleates assembly of the 50S subunit. Its function is as follows. One of the proteins that surrounds the polypeptide exit tunnel on the outside of the subunit. In Corynebacterium aurimucosum (strain ATCC 700975 / DSM 44827 / CIP 107346 / CN-1) (Corynebacterium nigricans), this protein is Large ribosomal subunit protein uL24.